We begin with the raw amino-acid sequence, 60 residues long: Transcriptional regulator Brz (60 aa).

The C4-type; atypical zinc finger occupies 8–52; that stretch reads CPRCGSDVKMGLPMGATVKSVTAASRQEPTSDTQKVRTVECRNDH.

This sequence belongs to the Brz family.

In terms of biological role, activates transcription of bacteriorhodopsin (bop) and phytoene synthase (crtB1). May interact with DNA or RNA via the zinc finger motif. The chain is Transcriptional regulator Brz (brz) from Halobacterium salinarum (strain ATCC 29341 / DSM 671 / R1).